A 63-amino-acid polypeptide reads, in one-letter code: Sec-independent protein translocase protein TatA (63 aa).

A helical transmembrane segment spans residues 1–21 (MGSLSMWHWLIVLVIVLLLFG). Residues 43–63 (MTDEDAPETAKTVDHKADETK) are disordered. A compositionally biased stretch (basic and acidic residues) spans 53–63 (KTVDHKADETK).

This sequence belongs to the TatA/E family. In terms of assembly, the Tat system comprises two distinct complexes: a TatABC complex, containing multiple copies of TatA, TatB and TatC subunits, and a separate TatA complex, containing only TatA subunits. Substrates initially bind to the TatABC complex, which probably triggers association of the separate TatA complex to form the active translocon.

Its subcellular location is the cell inner membrane. Functionally, part of the twin-arginine translocation (Tat) system that transports large folded proteins containing a characteristic twin-arginine motif in their signal peptide across membranes. TatA could form the protein-conducting channel of the Tat system. This Rhizobium etli (strain ATCC 51251 / DSM 11541 / JCM 21823 / NBRC 15573 / CFN 42) protein is Sec-independent protein translocase protein TatA.